The primary structure comprises 648 residues: Zinc finger CW-type PWWP domain protein 1 (648 aa).

Disordered regions lie at residues 1–103 (MMTT…TNAE) and 137–237 (VVST…QDHS). 2 stretches are compositionally biased toward basic and acidic residues: residues 61–79 (KKKEEKATMKNVPSREQEK) and 88–97 (QAEKKEKEKS). Residues 74–109 (SREQEKKRKAQINKQAEKKEKEKSSLTNAEFEEIVQ) are a coiled coil. A compositionally biased stretch (basic residues) spans 194 to 208 (SKKKSNRLTLSKRKK). Residues 209–237 (EAHEKVEKTQGGHEHRQEDRLKKTVQDHS) are compositionally biased toward basic and acidic residues. The segment at 250–304 (FGQCLVWVQCSFPNCGKWRRLCGNIDPSVLPDNWSCDQNTDVQYNRCDIPEETWT) adopts a CW-type zinc-finger fold. Cys-259, Cys-264, Cys-285, and Cys-296 together coordinate Zn(2+). Positions 317–383 (PGSIIWAKQY…VNMLKNFQEL (67 aa)) constitute a PWWP domain. The interval 436 to 648 (GERKDLQLSG…EDFPVALFGK (213 aa)) is disordered. Positions 453 to 471 (LEKKEKEEELEKEEGEKTD) are enriched in basic and acidic residues. Basic residues predominate over residues 505–516 (TLQRKIMKRSLG). Basic and acidic residues predominate over residues 585–595 (AKEEPRHREPL). Over residues 604-618 (LEDEASSDLDLEQLM) the composition is skewed to acidic residues. Ser-636 carries the post-translational modification Phosphoserine.

In terms of tissue distribution, testis.

It is found in the nucleus. The protein localises to the chromosome. Its function is as follows. Dual histone methylation reader specific for PRDM9-catalyzed histone marks (H3K4me3 and H3K36me3). Facilitates the repair of PRDM9-induced meiotic double-strand breaks (DSBs). Essential for male fertility and spermatogenesis. Required for meiosis prophase I progression in male but not in female germ cells. The polypeptide is Zinc finger CW-type PWWP domain protein 1 (ZCWPW1) (Homo sapiens (Human)).